We begin with the raw amino-acid sequence, 269 residues long: Arginine and glutamate-rich protein 1-B (269 aa).

Residues 1–57 (MGRSRSRSSSRSKHSKTSKHSKKRSRSRSRSRDRERKRRSKSRESKRNRRRESRSRS) are compositionally biased toward basic residues. The tract at residues 1–70 (MGRSRSRSSS…TATSRRDRER (70 aa)) is necessary and sufficient for RNA binding. Disordered stretches follow at residues 1-109 (MGRS…MERQ) and 233-269 (RMKL…KASE). Basic and acidic residues-rich tracts occupy residues 64–80 (SRRD…RIDI), 89–109 (SAVD…MERQ), and 233–249 (RMKL…EEQK). Residues 71–269 (AASPPERIDI…KLSFSLKASE (199 aa)) are necessary and sufficient for transcriptional regulation.

It belongs to the ARGLU1 family.

Its subcellular location is the nucleus. The protein resides in the nucleus speckle. The protein localises to the chromosome. Its function is as follows. Dual function regulator of gene expression; regulator of transcription and modulator of alternative splicing. General coactivator of nuclear receptor-induced gene expression. The polypeptide is Arginine and glutamate-rich protein 1-B (arglu1b) (Danio rerio (Zebrafish)).